A 177-amino-acid polypeptide reads, in one-letter code: Probasin (177 aa).

An N-terminal signal peptide occupies residues 1–17; sequence MRVILLLLTLDVLGVSS. A disulfide bridge connects residues C79 and C170.

It belongs to the calycin superfamily. Lipocalin family. Prostatic epithelial cells.

The protein resides in the nucleus. Its subcellular location is the secreted. This is Probasin (Pbsn) from Rattus norvegicus (Rat).